Here is a 1415-residue protein sequence, read N- to C-terminus: DNA-directed RNA polymerase subunit beta' (1415 aa).

Zn(2+) is bound by residues cysteine 72, cysteine 74, cysteine 87, and cysteine 90. Aspartate 463, aspartate 465, and aspartate 467 together coordinate Mg(2+). Cysteine 811, cysteine 885, cysteine 892, and cysteine 895 together coordinate Zn(2+).

It belongs to the RNA polymerase beta' chain family. The RNAP catalytic core consists of 2 alpha, 1 beta, 1 beta' and 1 omega subunit. When a sigma factor is associated with the core the holoenzyme is formed, which can initiate transcription. Requires Mg(2+) as cofactor. Zn(2+) is required as a cofactor.

It carries out the reaction RNA(n) + a ribonucleoside 5'-triphosphate = RNA(n+1) + diphosphate. Functionally, DNA-dependent RNA polymerase catalyzes the transcription of DNA into RNA using the four ribonucleoside triphosphates as substrates. In Cereibacter sphaeroides (strain ATCC 17023 / DSM 158 / JCM 6121 / CCUG 31486 / LMG 2827 / NBRC 12203 / NCIMB 8253 / ATH 2.4.1.) (Rhodobacter sphaeroides), this protein is DNA-directed RNA polymerase subunit beta'.